The following is a 359-amino-acid chain: MPSPIPVERFLPRDLSPSIDLRPCSSPLELSHRKLPGGLPACSGRPRLLPPRLAWCSIDWEQVLLLEPLGSGGFGSVYRATYRGETVALKKVKRSTKNSLASRQSFWAELNAARLRHPHVVRVVAASASCPGDPGCPGTIIMEYTGTGTLHQRIYGRSPPLGAEICMRYARHVADGLRFLHRDGVVHLDLKPANVLLAPGDLCKIGDFGCSQRLREGDEAAGGEPCCTQLRHVGGTYTHRAPELLKGEPVTAKADIYSFAITLWQMVSRELPYTGDRQCVLYAVVAYDLRPEMGPLFSHTEEGRAARTIVQSCWAARPQERPNAEQLLERLEQECAMCTGGPPSCSPESNAPPPLGTGL.

The 274-residue stretch at 63–336 (VLLLEPLGSG…LLERLEQECA (274 aa)) folds into the Protein kinase domain. Residues 69–77 (LGSGGFGSV) and lysine 90 each bind ATP. The active-site Proton acceptor is aspartate 189.

The protein belongs to the protein kinase superfamily. Ser/Thr protein kinase family.

It localises to the cytoplasm. The enzyme catalyses L-seryl-[protein] + ATP = O-phospho-L-seryl-[protein] + ADP + H(+). The catalysed reaction is L-threonyl-[protein] + ATP = O-phospho-L-threonyl-[protein] + ADP + H(+). Functionally, serine/threonine kinase involved in the regulation of MAPK signaling. The protein is Serine/threonine-protein kinase mos (mos) of Xenopus laevis (African clawed frog).